A 222-amino-acid chain; its full sequence is uncharacterized protein (222 aa).

7 helical membrane passes run 26–46 (YGLLALTLAFSGLVAYVSQQM), 48–68 (LPYPNVFVVLIGFYGLFFLTV), 75–95 (WGLVSTFALTGFMGYTLGPIL), 107–127 (VITSAFAMTALVFFGLSAYVL), 139–159 (FITAGFFVLLGAVLVSLFFQI), 166–186 (ISAGFVLFSSAMILYQTSAII), and 198–218 (ISLYVSIYNLFISLLQIFGIA).

The protein belongs to the BI1 family.

The protein localises to the cell membrane. This is an uncharacterized protein from Pseudomonas aeruginosa (strain ATCC 15692 / DSM 22644 / CIP 104116 / JCM 14847 / LMG 12228 / 1C / PRS 101 / PAO1).